Reading from the N-terminus, the 140-residue chain is Auxin-responsive protein IAA26 (140 aa).

The segment at 1–40 is disordered; sequence MASYGDDGVELTELTLGPPGASARRARRGRKNGHPPPSSS. An EAR-like (transcriptional repression) motif is present at residues 14-18; sequence LTLGP. Residues 24–33 show a composition bias toward basic residues; sequence RRARRGRKNG. One can recognise a PB1 domain in the interval 45-130; that stretch reads AYFVKVSMDG…SCKRMRVMRA (86 aa).

The protein belongs to the Aux/IAA family. As to quaternary structure, homodimers and heterodimers. Expressed in roots, seedlings and flowers.

It is found in the nucleus. Functionally, aux/IAA proteins are short-lived transcriptional factors that function as repressors of early auxin response genes at low auxin concentrations. The sequence is that of Auxin-responsive protein IAA26 (IAA26) from Oryza sativa subsp. japonica (Rice).